Consider the following 432-residue polypeptide: 3-phosphoshikimate 1-carboxyvinyltransferase (432 aa).

The 3-phosphoshikimate site is built by Lys-22, Ser-23, and Arg-27. Lys-22 contacts phosphoenolpyruvate. Phosphoenolpyruvate-binding residues include Gly-96 and Arg-127. 7 residues coordinate 3-phosphoshikimate: Ser-173, Ser-174, Gln-175, Ser-201, Asp-316, Asn-339, and Lys-343. Gln-175 provides a ligand contact to phosphoenolpyruvate. The Proton acceptor role is filled by Asp-316. Phosphoenolpyruvate contacts are provided by Arg-347, Arg-391, and Lys-416.

It belongs to the EPSP synthase family. In terms of assembly, monomer.

The protein localises to the cytoplasm. It catalyses the reaction 3-phosphoshikimate + phosphoenolpyruvate = 5-O-(1-carboxyvinyl)-3-phosphoshikimate + phosphate. It participates in metabolic intermediate biosynthesis; chorismate biosynthesis; chorismate from D-erythrose 4-phosphate and phosphoenolpyruvate: step 6/7. Catalyzes the transfer of the enolpyruvyl moiety of phosphoenolpyruvate (PEP) to the 5-hydroxyl of shikimate-3-phosphate (S3P) to produce enolpyruvyl shikimate-3-phosphate and inorganic phosphate. This Actinobacillus pleuropneumoniae serotype 7 (strain AP76) protein is 3-phosphoshikimate 1-carboxyvinyltransferase.